The primary structure comprises 527 residues: Amine oxidase [flavin-containing] A (527 aa).

N-acetylmethionine is present on M1. Topologically, residues 1-497 (MENQEKASIA…HTFWERNLPS (497 aa)) are cytoplasmic. Phosphoserine is present on S383. Residue C406 is modified to S-8alpha-FAD cysteine. The helical; Anchor for type IV membrane protein transmembrane segment at 498-518 (VSGLLKIIGFSTSVTALGFVL) threads the bilayer. Topologically, residues 519-527 (YKYKLLPRS) are mitochondrial intermembrane. The segment at 520-522 (KYK) is interaction with membrane phospholipid headgroups.

It belongs to the flavin monoamine oxidase family. As to quaternary structure, monomer, homo- or heterodimer (containing two subunits of similar size). Each subunit contains a covalently bound flavin. Enzymatically active as monomer. It depends on FAD as a cofactor.

The protein resides in the mitochondrion outer membrane. It catalyses the reaction a secondary aliphatic amine + O2 + H2O = a primary amine + an aldehyde + H2O2. The catalysed reaction is a primary methyl amine + O2 + H2O = an aldehyde + H2O2 + NH4(+). The enzyme catalyses (R)-adrenaline + O2 + H2O = (R)-3,4-dihydroxymandelaldehyde + methylamine + H2O2. It carries out the reaction dopamine + O2 + H2O = 3,4-dihydroxyphenylacetaldehyde + H2O2 + NH4(+). It catalyses the reaction tyramine + O2 + H2O = (4-hydroxyphenyl)acetaldehyde + H2O2 + NH4(+). The catalysed reaction is (R)-noradrenaline + O2 + H2O = (R)-3,4-dihydroxymandelaldehyde + H2O2 + NH4(+). The enzyme catalyses serotonin + O2 + H2O = (5-hydroxyindol-3-yl)acetaldehyde + H2O2 + NH4(+). It carries out the reaction kynuramine + O2 + H2O = 3-(2-aminophenyl)-3-oxopropanal + H2O2 + NH4(+). It catalyses the reaction tryptamine + O2 + H2O = indole-3-acetaldehyde + H2O2 + NH4(+). The catalysed reaction is 2-phenylethylamine + O2 + H2O = 2-phenylacetaldehyde + H2O2 + NH4(+). Catalyzes the oxidative deamination of primary and some secondary amine such as neurotransmitters, with concomitant reduction of oxygen to hydrogen peroxide and has important functions in the metabolism of neuroactive and vasoactive amines in the central nervous system and peripheral tissues. Preferentially oxidizes serotonin. Also catalyzes the oxidative deamination of kynuramine to 3-(2-aminophenyl)-3-oxopropanal that can spontaneously condense to 4-hydroxyquinoline. The polypeptide is Amine oxidase [flavin-containing] A (Pongo abelii (Sumatran orangutan)).